Consider the following 339-residue polypeptide: D-erythrose-4-phosphate dehydrogenase (339 aa).

NAD(+) is bound at residue 12 to 13 (RI). Residues 154 to 156 (SCT), Arg-200, 213 to 214 (TK), and Arg-236 contribute to the substrate site. The active-site Nucleophile is Cys-155. Asn-318 contacts NAD(+).

It belongs to the glyceraldehyde-3-phosphate dehydrogenase family. Epd subfamily. In terms of assembly, homotetramer.

The protein resides in the cytoplasm. It carries out the reaction D-erythrose 4-phosphate + NAD(+) + H2O = 4-phospho-D-erythronate + NADH + 2 H(+). It functions in the pathway cofactor biosynthesis; pyridoxine 5'-phosphate biosynthesis; pyridoxine 5'-phosphate from D-erythrose 4-phosphate: step 1/5. Functionally, catalyzes the NAD-dependent conversion of D-erythrose 4-phosphate to 4-phosphoerythronate. The protein is D-erythrose-4-phosphate dehydrogenase of Proteus mirabilis (strain HI4320).